Here is a 183-residue protein sequence, read N- to C-terminus: SAYSvFN domain-containing protein 1 (183 aa).

Topologically, residues 1-105 are cytoplasmic; that stretch reads MEQRLAEFRA…SFLTNITFLK (105 aa). The tract at residues 11-36 is disordered; the sequence is ARKRAGLAAQPPAASQGAQTPGEKAE. Over residues 16–36 the composition is skewed to low complexity; sequence GLAAQPPAASQGAQTPGEKAE. The tract at residues 91 to 105 is middle helical (MH); it reads SCWDQSFLTNITFLK. An intramembrane region (helical) is located at residues 106–126; that stretch reads VLLWLVLLGLFVELEFGLAYF. Topologically, residues 127–183 are cytoplasmic; it reads VLSLFYWMYVGTRGPEEKKEGEKSAYSVFNPGCEAIQGTLTAEQLERELQLRPLAGR.

This sequence belongs to the SAYSD1 family. As to quaternary structure, associates (via N-terminus) with ribosomes.

The protein resides in the endoplasmic reticulum membrane. It is found in the cytoplasmic vesicle membrane. Its function is as follows. Ufmylation 'reader' component of a translocation-associated quality control pathway, a mechanism that takes place when a ribosome has stalled during translation, and which is required to degrade clogged substrates. Specifically recognizes and binds ufmylated ribosomes when a ribosome has stalled, promoting the transport of stalled nascent chain via the TRAPP complex to lysosomes for degradation. The polypeptide is SAYSvFN domain-containing protein 1 (Homo sapiens (Human)).